The primary structure comprises 557 residues: IgE-binding protein (557 aa).

The disordered stretch occupies residues 113–172 (DGLGKPALSSSEAGEESSSEETDWEEEAAHYQPANWSRKKPKAAGEGQFADWPQGSRLQG). Residues 125–138 (AGEESSSEETDWEE) are compositionally biased toward acidic residues. Positions 344–534 (TAIRPGRRSR…TAAERHVQSQ (191 aa)) constitute an Integrase catalytic domain.

The protein is IgE-binding protein (Iap) of Mus musculus (Mouse).